Reading from the N-terminus, the 260-residue chain is Multiple myeloma tumor-associated protein 2 homolog (260 aa).

A compositionally biased stretch (gly residues) spans 1–11 (MFGSNRGGVRG). The disordered stretch occupies residues 1-21 (MFGSNRGGVRGGQDQFNWEDV). Residues lysine 22, lysine 104, and lysine 113 each participate in a glycyl lysine isopeptide (Lys-Gly) (interchain with G-Cter in SUMO2) cross-link. Basic and acidic residues predominate over residues 106–116 (EGGDPEEKGVD). 2 disordered regions span residues 106-133 (EGGD…RVAL) and 146-260 (SVFT…SSDD). A compositionally biased stretch (low complexity) spans 117–132 (RLLGLGSASGSAGRVA). A phosphoserine mark is found at serine 123 and serine 127. A compositionally biased stretch (basic and acidic residues) spans 170 to 182 (RAEDKVEPDAESH). A compositionally biased stretch (basic residues) spans 183–206 (KKSKKEKKKKKKKHKKHKKKKDKE). A phosphoserine mark is found at serine 215, serine 216, and serine 219.

The polypeptide is Multiple myeloma tumor-associated protein 2 homolog (Mmtag2) (Mus musculus (Mouse)).